The sequence spans 108 residues: Insulin-like peptide 17 (108 aa).

The N-terminal stretch at 1-19 (MFSTRGVLLLLSLMAAVAA) is a signal peptide.

This sequence belongs to the insulin family. As to expression, expressed in head neurons and the uterus.

The protein localises to the secreted. Its function is as follows. Involved in the regulation of the larval diapause. The chain is Insulin-like peptide 17 from Caenorhabditis elegans.